The sequence spans 170 residues: Large ribosomal subunit protein uL5 (170 aa).

It belongs to the universal ribosomal protein uL5 family. As to quaternary structure, part of the 50S ribosomal subunit; contacts the 5S rRNA and probably tRNA. Forms a bridge to the 30S subunit in the 70S ribosome.

Its function is as follows. This is one of the proteins that bind and probably mediate the attachment of the 5S RNA into the large ribosomal subunit, where it forms part of the central protuberance. In the 70S ribosome it contacts protein S13 of the 30S subunit (bridge B1b), connecting the 2 subunits; this bridge is implicated in subunit movement. May contact the P site tRNA; the 5S rRNA and some of its associated proteins might help stabilize positioning of ribosome-bound tRNAs. In Thermoplasma acidophilum (strain ATCC 25905 / DSM 1728 / JCM 9062 / NBRC 15155 / AMRC-C165), this protein is Large ribosomal subunit protein uL5.